We begin with the raw amino-acid sequence, 223 residues long: Putative 3-methyladenine DNA glycosylase (223 aa).

This sequence belongs to the DNA glycosylase MPG family.

The chain is Putative 3-methyladenine DNA glycosylase from Rickettsia typhi (strain ATCC VR-144 / Wilmington).